Reading from the N-terminus, the 303-residue chain is N-acetyl-D-glucosamine kinase (303 aa).

ATP-binding positions include 4–11 and 133–140; these read GFDIGGTK and GVGGGLIF. Zn(2+) is bound by residues His157, Cys177, Cys179, and Cys184.

This sequence belongs to the ROK (NagC/XylR) family. NagK subfamily.

It catalyses the reaction N-acetyl-D-glucosamine + ATP = N-acetyl-D-glucosamine 6-phosphate + ADP + H(+). It functions in the pathway cell wall biogenesis; peptidoglycan recycling. In terms of biological role, catalyzes the phosphorylation of N-acetyl-D-glucosamine (GlcNAc) derived from cell-wall degradation, yielding GlcNAc-6-P. The polypeptide is N-acetyl-D-glucosamine kinase (Escherichia coli O9:H4 (strain HS)).